We begin with the raw amino-acid sequence, 188 residues long: Putative manganese efflux pump MntP (188 aa).

A run of 6 helical transmembrane segments spans residues 3–23, 41–61, 62–82, 107–129, 143–163, and 168–188; these read LSAT…ASIG, LIFG…GMLA, SQFI…FLGG, LLVT…LAFL, ATFI…PLLG, and ILGG…HFAG.

The protein belongs to the MntP (TC 9.B.29) family.

It localises to the cell inner membrane. In terms of biological role, probably functions as a manganese efflux pump. The protein is Putative manganese efflux pump MntP of Klebsiella pneumoniae subsp. pneumoniae (strain ATCC 700721 / MGH 78578).